A 280-amino-acid polypeptide reads, in one-letter code: Large ribosomal subunit protein uL2 (280 aa).

Disordered regions lie at residues 1–59 (MAIR…GGHK) and 223–280 (GVVM…NKKR). Residues 23 to 33 (ELTRSTPEKSL) show a composition bias toward basic and acidic residues. 2 stretches are compositionally biased toward basic residues: residues 36–59 (PLHKTGGRNVHGHITTRHKGGGHK) and 269–280 (VRRRRSNKNKKR).

It belongs to the universal ribosomal protein uL2 family. In terms of assembly, part of the 50S ribosomal subunit. Forms a bridge to the 30S subunit in the 70S ribosome.

In terms of biological role, one of the primary rRNA binding proteins. Required for association of the 30S and 50S subunits to form the 70S ribosome, for tRNA binding and peptide bond formation. It has been suggested to have peptidyltransferase activity; this is somewhat controversial. Makes several contacts with the 16S rRNA in the 70S ribosome. This Corynebacterium kroppenstedtii (strain DSM 44385 / JCM 11950 / CIP 105744 / CCUG 35717) protein is Large ribosomal subunit protein uL2.